Consider the following 201-residue polypeptide: Holliday junction branch migration complex subunit RuvA (201 aa).

The tract at residues 1–64 (MIGFIRGLLV…EDAHSLFGFG (64 aa)) is domain I. Residues 65-143 (TEAERGLFRS…IGVPSLAPAS (79 aa)) are domain II. The flexible linker stretch occupies residues 144-153 (FAGGAAPLPA). Residues 153–201 (AADPADEAVSALIALGFKPQEANTLVARQAAEGRSAEDLIRAALQSAVR) are domain III.

It belongs to the RuvA family. In terms of assembly, homotetramer. Forms an RuvA(8)-RuvB(12)-Holliday junction (HJ) complex. HJ DNA is sandwiched between 2 RuvA tetramers; dsDNA enters through RuvA and exits via RuvB. An RuvB hexamer assembles on each DNA strand where it exits the tetramer. Each RuvB hexamer is contacted by two RuvA subunits (via domain III) on 2 adjacent RuvB subunits; this complex drives branch migration. In the full resolvosome a probable DNA-RuvA(4)-RuvB(12)-RuvC(2) complex forms which resolves the HJ.

It localises to the cytoplasm. Its function is as follows. The RuvA-RuvB-RuvC complex processes Holliday junction (HJ) DNA during genetic recombination and DNA repair, while the RuvA-RuvB complex plays an important role in the rescue of blocked DNA replication forks via replication fork reversal (RFR). RuvA specifically binds to HJ cruciform DNA, conferring on it an open structure. The RuvB hexamer acts as an ATP-dependent pump, pulling dsDNA into and through the RuvAB complex. HJ branch migration allows RuvC to scan DNA until it finds its consensus sequence, where it cleaves and resolves the cruciform DNA. This chain is Holliday junction branch migration complex subunit RuvA, found in Methylococcus capsulatus (strain ATCC 33009 / NCIMB 11132 / Bath).